Reading from the N-terminus, the 356-residue chain is Peptide chain release factor 1 (356 aa).

Glutamine 233 carries the N5-methylglutamine modification.

It belongs to the prokaryotic/mitochondrial release factor family. Methylated by PrmC. Methylation increases the termination efficiency of RF1.

It localises to the cytoplasm. In terms of biological role, peptide chain release factor 1 directs the termination of translation in response to the peptide chain termination codons UAG and UAA. The protein is Peptide chain release factor 1 of Syntrophotalea carbinolica (strain DSM 2380 / NBRC 103641 / GraBd1) (Pelobacter carbinolicus).